The chain runs to 1093 residues: MARPVRGGLGAPRRSPCLLLLWLLLLRLEPVTAAAGPRAPCAAACTCAGDSLDCGGRGLAALPGDLPSWTRSLNLSYNKLSEIDPAGFEDLPNLQEVYLNNNELTAVPSLGAASSHVVSLFLQHNKIRSVEGSQLKAYLSLEVLDLSLNNITEVRNTCFPHGPPIKELNLAGNRIGTLELGAFDGLSRSLLTLRLSKNRITQLPVRAFKLPRLTQLDLNRNRIRLIEGLTFQGLNSLEVLKLQRNNISKLTDGAFWGLSKMHVLHLEYNSLVEVNSGSLYGLTALHQLHLSNNSIARIHRKGWSFCQKLHELVLSFNNLTRLDEESLAELSSLSVLRLSHNSISHIAEGAFKGLRSLRVLDLDHNEISGTIEDTSGAFSGLDSLSKLTLFGNKIKSVAKRAFSGLEGLEHLNLGGNAIRSVQFDAFVKMKNLKELHISSDSFLCDCQLKWLPPWLIGRMLQAFVTATCAHPESLKGQSIFSVPPESFVCDDFLKPQIITQPETTMAMVGKDIRFTCSAASSSSSPMTFAWKKDNEVLTNADMENFVHVHAQDGEVMEYTTILHLRQVTFGHEGRYQCVITNHFGSTYSHKARLTVNVLPSFTKTPHDITIRTTTMARLECAATGHPNPQIAWQKDGGTDFPAARERRMHVMPDDDVFFITDVKIDDAGVYSCTAQNSAGSISANATLTVLETPSLVVPLEDRVVSVGETVALQCKATGNPPPRITWFKGDRPLSLTERHHLTPDNQLLVVQNVVAEDAGRYTCEMSNTLGTERAHSQLSVLPAAGCRKDGTTVGIFTIAVVSSIVLTSLVWVCIIYQTRKKSEEYSVTNTDETVVPPDVPSYLSSQGTLSDRQETVVRTEGGPQANGHIESNGVCPRDASHFPEPDTHSVACRQPKLCAGSAYHKEPWKAMEKAEGTPGPHKMEHGGRVVCSDCNTEVDCYSRGQAFHPQPVSRDSAQPSAPNGPEPGGSDQEHSPHHQCSRTAAGSCPECQGSLYPSNHDRMLTAVKKKPMASLDGKGDSSWTLARLYHPDSTELQPASSLTSGSPERAEAQYLLVSNGHLPKACDASPESTPLTGQLPGKQRVPLLLAPKS.

An N-terminal signal peptide occupies residues 1 to 34 (MARPVRGGLGAPRRSPCLLLLWLLLLRLEPVTAA). The region spanning 35-68 (AGPRAPCAAACTCAGDSLDCGGRGLAALPGDLPS) is the LRRNT domain. Over 35-794 (AGPRAPCAAA…GCRKDGTTVG (760 aa)) the chain is Extracellular. A disulfide bridge links cysteine 45 with cysteine 54. LRR repeat units lie at residues 69–90 (WTRSLNLSYNKLSEIDPAGFED), 93–114 (NLQEVYLNNNELTAVPSLGAAS), 116–137 (HVVSLFLQHNKIRSVEGSQLKA), 140–161 (SLEVLDLSLNNITEVRNTCFPH), 164–185 (PIKELNLAGNRIGTLELGAFDG), 189–210 (SLLTLRLSKNRITQLPVRAFKL), 212–233 (RLTQLDLNRNRIRLIEGLTFQG), 236–257 (SLEVLKLQRNNISKLTDGAFWG), 260–281 (KMHVLHLEYNSLVEVNSGSLYG), 284–305 (ALHQLHLSNNSIARIHRKGWSF), 308–329 (KLHELVLSFNNLTRLDEESLAE), 332–353 (SLSVLRLSHNSISHIAEGAFKG), 356–378 (SLRVLDLDHNEISGTIEDTSGAF), 383–404 (SLSKLTLFGNKIKSVAKRAFSG), and 407–428 (GLEHLNLGGNAIRSVQFDAFVK). N-linked (GlcNAc...) asparagine glycosylation is present at asparagine 74. An N-linked (GlcNAc...) asparagine glycan is attached at asparagine 150. The N-linked (GlcNAc...) asparagine glycan is linked to asparagine 246. 2 N-linked (GlcNAc...) asparagine glycosylation sites follow: asparagine 292 and asparagine 318. Residues 440–491 (DSFLCDCQLKWLPPWLIGRMLQAFVTATCAHPESLKGQSIFSVPPESFVCDD) form the LRRCT domain. 4 cysteine pairs are disulfide-bonded: cysteine 444/cysteine 468, cysteine 446/cysteine 489, cysteine 516/cysteine 577, and cysteine 620/cysteine 672. Ig-like C2-type domains lie at 495 to 594 (PQII…ARLT), 599 to 688 (PSFT…ATLT), and 693 to 779 (PSLV…SQLS). N-linked (GlcNAc...) asparagine glycosylation occurs at asparagine 684. A disulfide bridge links cysteine 714 with cysteine 763. A helical membrane pass occupies residues 795 to 815 (IFTIAVVSSIVLTSLVWVCII). Residues 816 to 1093 (YQTRKKSEEY…RVPLLLAPKS (278 aa)) are Cytoplasmic-facing. Disordered stretches follow at residues 946–983 (AFHPQPVSRDSAQPSAPNGPEPGGSDQEHSPHHQCSRT) and 1063–1093 (PKACDASPESTPLTGQLPGKQRVPLLLAPKS).

Interacts (via extracellular LRR and Ig-like domains) with EGFR/ERBB1, ERBB2, ERBB3 and ERBB4 (via extracellular domain). The physiological relevance of the interaction is controversial; LRIG1 may have low affinity for EGFR, and interaction may occur only when high levels of both proteins are present. As to expression, widely expressed.

It is found in the cell membrane. In terms of biological role, acts as a feedback negative regulator of signaling by receptor tyrosine kinases, through a mechanism that involves enhancement of receptor ubiquitination and accelerated intracellular degradation. The chain is Leucine-rich repeats and immunoglobulin-like domains protein 1 from Homo sapiens (Human).